The sequence spans 287 residues: Bifunctional protein FolD (287 aa).

NADP(+) is bound by residues 160–162 (GRS), Ser189, and Thr230.

This sequence belongs to the tetrahydrofolate dehydrogenase/cyclohydrolase family. As to quaternary structure, homodimer.

The enzyme catalyses (6R)-5,10-methylene-5,6,7,8-tetrahydrofolate + NADP(+) = (6R)-5,10-methenyltetrahydrofolate + NADPH. It carries out the reaction (6R)-5,10-methenyltetrahydrofolate + H2O = (6R)-10-formyltetrahydrofolate + H(+). It functions in the pathway one-carbon metabolism; tetrahydrofolate interconversion. In terms of biological role, catalyzes the oxidation of 5,10-methylenetetrahydrofolate to 5,10-methenyltetrahydrofolate and then the hydrolysis of 5,10-methenyltetrahydrofolate to 10-formyltetrahydrofolate. This chain is Bifunctional protein FolD, found in Chlamydia caviae (strain ATCC VR-813 / DSM 19441 / 03DC25 / GPIC) (Chlamydophila caviae).